The chain runs to 451 residues: Penicillin-binding protein 4* (451 aa).

The Acyl-ester intermediate role is filled by S61.

It belongs to the beta-lactamase family.

It localises to the forespore outer membrane. Its pathway is cell wall biogenesis; peptidoglycan biosynthesis. Functionally, probably involved in peptidoglycan modification during cortex synthesis. This chain is Penicillin-binding protein 4* (pbpE), found in Bacillus subtilis (strain 168).